The following is a 521-amino-acid chain: Protein PLM2 (521 aa).

The tract at residues 1–63 (MSHLFPPSSP…SIGRQSSPVK (63 aa)) is disordered. The span at 51-63 (PSSSIGRQSSPVK) shows a compositional bias: polar residues. In terms of domain architecture, FHA spans 102–156 (LAIGRKKSVCNIILPCRKNISRQHAFISYAADRNEIKLECNGTNGLSVHLPYSMQ). 4 positions are modified to phosphoserine: Ser-281, Ser-295, Ser-302, and Ser-384.

Belongs to the PLM2/TOS4 family. Phosphorylated by CDC28.

Its subcellular location is the nucleus. Functionally, binds to the promoters of genes with functions important for the G1/S (start) transition; primarily genes involved in DNA synthesis and repair, chromosome segregation, nuclear division and transcription. The chain is Protein PLM2 (PLM2) from Saccharomyces cerevisiae (strain ATCC 204508 / S288c) (Baker's yeast).